A 291-amino-acid chain; its full sequence is Nucleotide-binding protein lhv_0732 (291 aa).

13–20 provides a ligand contact to ATP; it reads GMSGAGKT. 61-64 contacts GTP; it reads DLRV.

This sequence belongs to the RapZ-like family.

In terms of biological role, displays ATPase and GTPase activities. This is Nucleotide-binding protein lhv_0732 from Lactobacillus helveticus (strain DPC 4571).